Reading from the N-terminus, the 278-residue chain is Probable cytochrome c oxidase subunit 3 (278 aa).

The next 6 membrane-spanning stretches (helical) occupy residues 21–41, 46–66, 89–109, 174–194, 212–232, and 256–276; these read PWPV…VSFM, FNIY…YSWW, IGMA…FASF, CVTA…MQAY, FYLA…FLIV, and AWYW…VYIF.

This sequence belongs to the cytochrome c oxidase subunit 3 family.

It localises to the cell membrane. It carries out the reaction 4 Fe(II)-[cytochrome c] + O2 + 8 H(+)(in) = 4 Fe(III)-[cytochrome c] + 2 H2O + 4 H(+)(out). The sequence is that of Probable cytochrome c oxidase subunit 3 (ctaE) from Rickettsia felis (strain ATCC VR-1525 / URRWXCal2) (Rickettsia azadi).